Here is a 409-residue protein sequence, read N- to C-terminus: 5-aminolevulinate synthase (409 aa).

Positions 21, 137, and 156 each coordinate succinyl-CoA. Pyridoxal 5'-phosphate is bound by residues Ser189, His217, and Thr245. Lys248 is a catalytic residue. Residue Lys248 is modified to N6-(pyridoxal phosphate)lysine. Residues Ser277 and Thr278 each coordinate pyridoxal 5'-phosphate. Residue Thr365 participates in succinyl-CoA binding.

The protein belongs to the class-II pyridoxal-phosphate-dependent aminotransferase family. As to quaternary structure, homodimer. It depends on pyridoxal 5'-phosphate as a cofactor.

The catalysed reaction is succinyl-CoA + glycine + H(+) = 5-aminolevulinate + CO2 + CoA. It participates in porphyrin-containing compound metabolism; protoporphyrin-IX biosynthesis; 5-aminolevulinate from glycine: step 1/1. The protein is 5-aminolevulinate synthase (hemA) of Rhodobacter capsulatus (strain ATCC BAA-309 / NBRC 16581 / SB1003).